A 1401-amino-acid polypeptide reads, in one-letter code: MGRLVVKREDYMATKASAIGHASVKKRIRKMFGNIHEVVDMPNLIEVQRDSYENFLRSRPEDGYVSGLEKTLRSVFPIRDFGGVAELDFVQYELEEPKFDVDECRQRGITYAAPMRVTLRLIVFEVDPDTETRSVLDIKEQDVYMGDMPLMTRNGTFFINGTERVIVSQMHRSPGVLFDHDKGKTHSSGKFLFAARVIPYRGSWLDFEFDAKDIVNVRIDRKRKLPVTTLLYALGLNAEQILHHFYNTITFVRGDGGWKVPYVAESWRGRKPFFDIINGDTGEVVFPAGQKISPRAANKAGRDGLETLLIPTEEIYGHYAAYDVIDESTGRIWIEAGDEVTPENLELLDNAGVATLELLDIDHVSTGPWIRNTLKADKAEDRDHALAEIYRVMRPGEPPTKETAEALFYGLFFDPERYDLSAVGRVKLNMRLDLDCPDTVTTLRAEDILAVVKTLVDLKDGKGEVDDIDNLGNRRVRSVGELLENQYRVGLLRMERAVKERMSSVDVSTVMPNDLINAKPAVAAVREFFGSSQLSQFMDQTNPLSEVTHKRRVSALGPGGLTRERAGFEVRDVHPTHYGRICPIETPEGPNIGLINSLATFSRINKYGFIETPYRKVVDHKVTNEVIYLSAMEESRYTVAQANAELDAEGHFVEELVSAREAGEFLMAPREQITLMDVSPKQLVSVAASLIPFLENDDANRALMGSNMQRQAVSLVRAEAPFVGTGMEETVARDSGAAISARRAGIVDQVDASRIVIRTTGEIEAGKPGVDIYRLMKFQRSNQSTCINQRPLVSVGDYVNAGDVLADGPSTELGELALGRNVLVAFMPWNGYNYEDSILISERIVKDDVFTSIHIDEFEVMARDTKLGPEDITRDIPNVGEDALRNLDEAGIVYIGAEVQPGDILVGKITPKGESPMTPEEKLLRAIFGEKASDVRDTSLRLPPGVAGTIVDVRVFNRHGVDKDERAMAIEREEIERLTKDREDERAILNRATYAQLQEKLLGQTVAAAPYKHIVKGARIDIETLASVEPHKWFKFAVEDDARQAELEAIKNQYDSADEAIRKRFEDRVEKAQRGDELPPGVLKMVKVFVAVKRKLQPGDKMAGRHGNKGVISRILPAEDMPFLADGTPVDIVLNPLGVPSRMNIGQIFETHLGWAARGLGAKVRTALEEWREANADRYEWDFSPPEVVRERMIEVYGEKYAEDIKSREDREIVEMAGLLRNGVPMATPVFDGAKPEDISEMLNLAGLDDSGQVELYDGRTGEQFDRKVTVGYIYMLKLHHLVDDKIHARSIGPYSLVTQQPLGGKAQFGGQRFGEMEVWALQAYGAAYTLQEMLTVKSDDVVGRTKVYEAIVKGDDTFEAGIPESFNVLVKEMHSLGLNVELKTSKAKDEDDSSFQVAAE.

Belongs to the RNA polymerase beta chain family. The RNAP catalytic core consists of 2 alpha, 1 beta, 1 beta' and 1 omega subunit. When a sigma factor is associated with the core the holoenzyme is formed, which can initiate transcription.

It catalyses the reaction RNA(n) + a ribonucleoside 5'-triphosphate = RNA(n+1) + diphosphate. DNA-dependent RNA polymerase catalyzes the transcription of DNA into RNA using the four ribonucleoside triphosphates as substrates. This Zymomonas mobilis subsp. mobilis (strain ATCC 31821 / ZM4 / CP4) protein is DNA-directed RNA polymerase subunit beta.